The primary structure comprises 121 residues: Small ribosomal subunit protein uS13 (121 aa).

The disordered stretch occupies residues 97 to 121 (VRGQRTRTNARTRRGARKTVAGKKK). The segment covering 100–121 (QRTRTNARTRRGARKTVAGKKK) has biased composition (basic residues).

It belongs to the universal ribosomal protein uS13 family. As to quaternary structure, part of the 30S ribosomal subunit. Forms a loose heterodimer with protein S19. Forms two bridges to the 50S subunit in the 70S ribosome.

In terms of biological role, located at the top of the head of the 30S subunit, it contacts several helices of the 16S rRNA. In the 70S ribosome it contacts the 23S rRNA (bridge B1a) and protein L5 of the 50S subunit (bridge B1b), connecting the 2 subunits; these bridges are implicated in subunit movement. Contacts the tRNAs in the A and P-sites. This chain is Small ribosomal subunit protein uS13, found in Parasynechococcus marenigrum (strain WH8102).